Reading from the N-terminus, the 70-residue chain is ATP synthase subunit c (70 aa).

2 helical membrane passes run 3–23 (ALAA…IGIA) and 44–64 (LFFI…VIAI).

The protein belongs to the ATPase C chain family. F-type ATPases have 2 components, F(1) - the catalytic core - and F(0) - the membrane proton channel. F(1) has five subunits: alpha(3), beta(3), gamma(1), delta(1), epsilon(1). F(0) has three main subunits: a(1), b(2) and c(10-14). The alpha and beta chains form an alternating ring which encloses part of the gamma chain. F(1) is attached to F(0) by a central stalk formed by the gamma and epsilon chains, while a peripheral stalk is formed by the delta and b chains.

It is found in the cell membrane. Functionally, f(1)F(0) ATP synthase produces ATP from ADP in the presence of a proton or sodium gradient. F-type ATPases consist of two structural domains, F(1) containing the extramembraneous catalytic core and F(0) containing the membrane proton channel, linked together by a central stalk and a peripheral stalk. During catalysis, ATP synthesis in the catalytic domain of F(1) is coupled via a rotary mechanism of the central stalk subunits to proton translocation. Key component of the F(0) channel; it plays a direct role in translocation across the membrane. A homomeric c-ring of between 10-14 subunits forms the central stalk rotor element with the F(1) delta and epsilon subunits. In Caldicellulosiruptor saccharolyticus (strain ATCC 43494 / DSM 8903 / Tp8T 6331), this protein is ATP synthase subunit c.